The following is a 444-amino-acid chain: Phosphoglucosamine mutase (444 aa).

Ser102 functions as the Phosphoserine intermediate in the catalytic mechanism. Mg(2+) is bound by residues Ser102, Asp241, Asp243, and Asp245. Ser102 carries the post-translational modification Phosphoserine.

The protein belongs to the phosphohexose mutase family. The cofactor is Mg(2+). Activated by phosphorylation.

The enzyme catalyses alpha-D-glucosamine 1-phosphate = D-glucosamine 6-phosphate. Catalyzes the conversion of glucosamine-6-phosphate to glucosamine-1-phosphate. The polypeptide is Phosphoglucosamine mutase (Buchnera aphidicola subsp. Acyrthosiphon pisum (strain 5A)).